The primary structure comprises 344 residues: Methionine import ATP-binding protein MetN 1 (344 aa).

Residues 2–241 (IELRNLSQRF…PHHEVTRALI (240 aa)) form the ABC transporter domain. 38 to 45 (GRSGAGKS) provides a ligand contact to ATP.

It belongs to the ABC transporter superfamily. Methionine importer (TC 3.A.1.24) family. As to quaternary structure, the complex is composed of two ATP-binding proteins (MetN), two transmembrane proteins (MetI) and a solute-binding protein (MetQ).

Its subcellular location is the cell inner membrane. It catalyses the reaction L-methionine(out) + ATP + H2O = L-methionine(in) + ADP + phosphate + H(+). The enzyme catalyses D-methionine(out) + ATP + H2O = D-methionine(in) + ADP + phosphate + H(+). Part of the ABC transporter complex MetNIQ involved in methionine import. Responsible for energy coupling to the transport system. The protein is Methionine import ATP-binding protein MetN 1 of Burkholderia orbicola (strain AU 1054).